The primary structure comprises 299 residues: Ribosomal RNA small subunit methyltransferase H (299 aa).

S-adenosyl-L-methionine is bound by residues 36-38, D55, Y82, D103, and Q110; that span reads GGH. Composition is skewed to basic and acidic residues over residues 269–282 and 289–299; these read PVRP…ENPR and RAAERIEEGGD. A disordered region spans residues 269–299; sequence PVRPSEEEIRENPRARSGRLRAAERIEEGGD.

This sequence belongs to the methyltransferase superfamily. RsmH family.

It is found in the cytoplasm. It carries out the reaction cytidine(1402) in 16S rRNA + S-adenosyl-L-methionine = N(4)-methylcytidine(1402) in 16S rRNA + S-adenosyl-L-homocysteine + H(+). Specifically methylates the N4 position of cytidine in position 1402 (C1402) of 16S rRNA. This chain is Ribosomal RNA small subunit methyltransferase H, found in Thermotoga maritima (strain ATCC 43589 / DSM 3109 / JCM 10099 / NBRC 100826 / MSB8).